A 534-amino-acid chain; its full sequence is NAD(P)H-quinone oxidoreductase chain 4 (534 aa).

The next 14 membrane-spanning stretches (helical) occupy residues 12–32, 44–64, 96–116, 120–140, 144–164, 176–196, 220–240, 251–271, 285–305, 314–334, 340–360, 384–404, 425–445, and 472–492; these read FPWL…IPFF, FALS…INGF, MPLI…AWPV, PKLF…VFAV, LLFF…LAIW, FIIY…AMGF, ILCY…VPLH, TAPV…YALL, FAPL…LTSF, IAYS…SFSS, AMLQ…LVGA, FALW…SGFV, VVMA…LLSM, and VYII…PRLV.

This sequence belongs to the complex I subunit 4 family.

It is found in the cellular thylakoid membrane. It catalyses the reaction a plastoquinone + NADH + (n+1) H(+)(in) = a plastoquinol + NAD(+) + n H(+)(out). It carries out the reaction a plastoquinone + NADPH + (n+1) H(+)(in) = a plastoquinol + NADP(+) + n H(+)(out). NDH-1 shuttles electrons from NAD(P)H, via FMN and iron-sulfur (Fe-S) centers, to quinones in the respiratory chain. The immediate electron acceptor for the enzyme in this species is believed to be plastoquinone. Couples the redox reaction to proton translocation (for every two electrons transferred, four hydrogen ions are translocated across the cytoplasmic membrane), and thus conserves the redox energy in a proton gradient. The protein is NAD(P)H-quinone oxidoreductase chain 4 of Prochlorococcus marinus (strain MIT 9215).